The sequence spans 1413 residues: DNA-directed RNA polymerase subunit beta' (1413 aa).

Residues Cys-72, Cys-74, Cys-87, and Cys-90 each coordinate Zn(2+). 3 residues coordinate Mg(2+): Asp-463, Asp-465, and Asp-467. Zn(2+) is bound by residues Cys-811, Cys-885, Cys-892, and Cys-895.

It belongs to the RNA polymerase beta' chain family. The RNAP catalytic core consists of 2 alpha, 1 beta, 1 beta' and 1 omega subunit. When a sigma factor is associated with the core the holoenzyme is formed, which can initiate transcription. Mg(2+) is required as a cofactor. It depends on Zn(2+) as a cofactor.

It catalyses the reaction RNA(n) + a ribonucleoside 5'-triphosphate = RNA(n+1) + diphosphate. Functionally, DNA-dependent RNA polymerase catalyzes the transcription of DNA into RNA using the four ribonucleoside triphosphates as substrates. This is DNA-directed RNA polymerase subunit beta' from Ruegeria pomeroyi (strain ATCC 700808 / DSM 15171 / DSS-3) (Silicibacter pomeroyi).